The primary structure comprises 313 residues: Ethylene-responsive transcription factor ERN2 (313 aa).

Over residues 1 to 10 (MEIQFDEPKK) the composition is skewed to basic and acidic residues. Residues 1-29 (MEIQFDEPKKSLRPKKVNKFKGRNKKSET) form a disordered region. Positions 11–24 (SLRPKKVNKFKGRN) are enriched in basic residues. A DNA-binding region (AP2/ERF) is located at residues 32–89 (KFVGVRQRPSGRYVAEIKDTTQNIRMWLGTFETAEEAARAYDEAATLLRGSKTRTNFV). Disordered stretches follow at residues 108–143 (NRKK…TSST) and 157–204 (TSAS…SSST). Composition is skewed to low complexity over residues 122 to 143 (SSTT…TSST) and 157 to 193 (TSAS…TNVN).

It belongs to the AP2/ERF transcription factor family. ERF subfamily. In terms of tissue distribution, expressed in roots, root hairs and leaves. Expressed in root epidermis and root hairs.

Its subcellular location is the nucleus. In terms of biological role, transcription factor involved in symbiotic nodule signaling in response to rhizobial Nod factors (NFs). Binds to the GCC box (NF-responsive box) of ENOD11 promoter. Acts as a transcriptional activator of NF-responsive box-containing target gene promoters in root hairs. Involved in early stages of root nodule development. Functions redundantly with ERN1. Is essential with ERN1 for the initiation of root hair infection, and nodule organogenesis and development. Required for accurate expression of the NF signaling genes ENOD11 and ENOD12. The chain is Ethylene-responsive transcription factor ERN2 from Medicago truncatula (Barrel medic).